The primary structure comprises 418 residues: Odorant receptor 13a (418 aa).

The Cytoplasmic portion of the chain corresponds to 1 to 38; it reads MFYSYPYKALSFPIQCVWLKLNGSWPLTESSRPWRSQS. A helical membrane pass occupies residues 39 to 59; it reads LLATAYIVWAWYVIASVGITI. At 60–70 the chain is on the extracellular side; the sequence is SYQTAFLLNNL. The N-linked (GlcNAc...) asparagine glycan is linked to Asn69. Residues 71 to 91 form a helical membrane-spanning segment; the sequence is SDIIITTENCCTTFMGVLNFV. Residues 92–140 are Cytoplasmic-facing; that stretch reads RLIHLRLNQRKFRQLIENFSYEIWIPNSSKNNVAAECRRRMVTFSIMTS. Residues 141 to 161 traverse the membrane as a helical segment; the sequence is LLACLIIMYCVLPLVEIFFGP. Residues 162–195 lie on the Extracellular side of the membrane; that stretch reads AFDAQNKPFPYKMIFPYDAQSSWIRYVMTYIFTS. A helical membrane pass occupies residues 196 to 216; sequence YAGICVVTTLFAEDTILGFFI. At 217–273 the chain is on the cytoplasmic side; that stretch reads TYTCGQFHLLHQRIAGLFAGSNAELAESIQLERLKRIVEKHNNIISFAKRLEDFFNP. Residues 274-294 traverse the membrane as a helical segment; that stretch reads ILLANLMISSVLICMVGFQIV. At 295-299 the chain is on the extracellular side; that stretch reads TGKNM. Residues 300 to 320 form a helical membrane-spanning segment; the sequence is FIGDYVKFIIYISSALSQLYV. Residues 321 to 385 lie on the Cytoplasmic side of the membrane; it reads LCENGDALIK…PVRITAFKFS (65 aa). A helical transmembrane segment spans residues 386 to 406; that stretch reads TLSLQSFTAILSTSISYFTLL. Topologically, residues 407 to 418 are extracellular; it reads RSVYFDDEKKLD.

Belongs to the insect chemoreceptor superfamily. Heteromeric odorant receptor channel (TC 1.A.69) family. Or1a subfamily. In terms of assembly, interacts with Orco. Complexes exist early in the endomembrane system in olfactory sensory neurons (OSNs), coupling these complexes to the conserved ciliary trafficking pathway. As to expression, expressed in olfactory sensory neurons in the antenna.

The protein localises to the cell membrane. Functionally, odorant receptor which mediates acceptance or avoidance behavior, depending on its substrates. The odorant receptor repertoire encodes a large collection of odor stimuli that vary widely in identity, intensity, and duration. May form a complex with Orco to form odorant-sensing units, providing sensitive and prolonged odorant signaling and calcium permeability. Involved in the behavioral responses to octanol, nonanol, and pentyl acetate. In Drosophila melanogaster (Fruit fly), this protein is Odorant receptor 13a (Or13a).